The primary structure comprises 51 residues: Large ribosomal subunit protein eL39 (51 aa).

This sequence belongs to the eukaryotic ribosomal protein eL39 family.

The sequence is that of Large ribosomal subunit protein eL39 (RpL39) from Drosophila melanogaster (Fruit fly).